The sequence spans 146 residues: Hemoglobin subunit beta (146 aa).

An N-acetylvaline modification is found at Val-1. Residues 2-146 (HLSGEEKACV…VANALAHKYH (145 aa)) enclose the Globin domain. Thr-12 bears the Phosphothreonine mark. Ser-44 carries the post-translational modification Phosphoserine. An N6-acetyllysine modification is found at Lys-59. Position 63 (His-63) interacts with heme b. Lys-82 is subject to N6-acetyllysine. His-92 serves as a coordination point for heme b. S-nitrosocysteine is present on Cys-93. At Lys-144 the chain carries N6-acetyllysine.

It belongs to the globin family. Heterotetramer of two alpha chains and two beta chains. In terms of tissue distribution, red blood cells.

In terms of biological role, involved in oxygen transport from the lung to the various peripheral tissues. This chain is Hemoglobin subunit beta (HBB), found in Suncus murinus (Asian house shrew).